We begin with the raw amino-acid sequence, 295 residues long: Bifunctional protein FolD (295 aa).

Residues 166-168 (GRS), serine 195, and isoleucine 236 contribute to the NADP(+) site.

This sequence belongs to the tetrahydrofolate dehydrogenase/cyclohydrolase family. Homodimer.

The enzyme catalyses (6R)-5,10-methylene-5,6,7,8-tetrahydrofolate + NADP(+) = (6R)-5,10-methenyltetrahydrofolate + NADPH. It carries out the reaction (6R)-5,10-methenyltetrahydrofolate + H2O = (6R)-10-formyltetrahydrofolate + H(+). Its pathway is one-carbon metabolism; tetrahydrofolate interconversion. In terms of biological role, catalyzes the oxidation of 5,10-methylenetetrahydrofolate to 5,10-methenyltetrahydrofolate and then the hydrolysis of 5,10-methenyltetrahydrofolate to 10-formyltetrahydrofolate. This chain is Bifunctional protein FolD, found in Chlorobium chlorochromatii (strain CaD3).